A 592-amino-acid chain; its full sequence is Protein alan shepard (592 aa).

A disordered region spans residues 1-68; it reads MGGPHHQHQQ…ASVAAAPPTP (68 aa). Gly residues predominate over residues 18 to 28; the sequence is VGGGNGHGGGA. The span at 36 to 54 shows a compositional bias: polar residues; the sequence is PNSQQLPPQMPRSQNYANG. Over residues 55 to 64 the composition is skewed to low complexity; it reads SSSAASVAAA. Residues Tyr-124 and Tyr-140 each carry the phosphotyrosine modification. The interval 162-224 is disordered; the sequence is PATTTYGQRV…AQNQNQQGGE (63 aa). Low complexity predominate over residues 176–224; that stretch reads SPSNTNSSSSSNTGSQSGTLSTSLSNTTNTNTTMGPNGTAQNQNQQGGE. RRM domains lie at 229-307 and 319-398; these read TNLY…IWVL and TNLY…FADG. Residues 565-592 form a disordered region; sequence PMTDSEQASTAASPDEAYTQYPHQAAPK.

In terms of biological role, has a role in the perception of gravity. This Drosophila mojavensis (Fruit fly) protein is Protein alan shepard.